A 101-amino-acid polypeptide reads, in one-letter code: Small ribosomal subunit protein uS14 (101 aa).

Belongs to the universal ribosomal protein uS14 family. In terms of assembly, part of the 30S ribosomal subunit. Contacts proteins S3 and S10.

Binds 16S rRNA, required for the assembly of 30S particles and may also be responsible for determining the conformation of the 16S rRNA at the A site. The protein is Small ribosomal subunit protein uS14 of Idiomarina loihiensis (strain ATCC BAA-735 / DSM 15497 / L2-TR).